The sequence spans 159 residues: Urease accessory protein UreE (159 aa).

This sequence belongs to the UreE family.

It localises to the cytoplasm. In terms of biological role, involved in urease metallocenter assembly. Binds nickel. Probably functions as a nickel donor during metallocenter assembly. The chain is Urease accessory protein UreE from Vibrio parahaemolyticus.